A 92-amino-acid chain; its full sequence is Small ribosomal subunit protein uS19 (92 aa).

The tract at residues 72-92 (GEFSPTRSFRGHAGAKNKGKK) is disordered. Positions 80–92 (FRGHAGAKNKGKK) are enriched in basic residues.

This sequence belongs to the universal ribosomal protein uS19 family.

Its function is as follows. Protein S19 forms a complex with S13 that binds strongly to the 16S ribosomal RNA. This is Small ribosomal subunit protein uS19 from Flavobacterium johnsoniae (strain ATCC 17061 / DSM 2064 / JCM 8514 / BCRC 14874 / CCUG 350202 / NBRC 14942 / NCIMB 11054 / UW101) (Cytophaga johnsonae).